The following is a 118-amino-acid chain: Fluoride-specific ion channel FluC 1 (118 aa).

Transmembrane regions (helical) follow at residues 5–25 (FVLVGFGAALGAMLRYGISVL), 34–54 (FPFATFFINITGSFLLGFLVS), 56–76 (ALGPVWQLFLGTGFMGGYTTF), and 98–118 (YLGCTYVFGLIAAFLGLMLGV). Na(+) contacts are provided by glycine 71 and threonine 74.

Belongs to the fluoride channel Fluc/FEX (TC 1.A.43) family.

The protein resides in the cell membrane. The catalysed reaction is fluoride(in) = fluoride(out). With respect to regulation, na(+) is not transported, but it plays an essential structural role and its presence is essential for fluoride channel function. Its function is as follows. Fluoride-specific ion channel. Important for reducing fluoride concentration in the cell, thus reducing its toxicity. The chain is Fluoride-specific ion channel FluC 1 from Listeria monocytogenes serotype 4b (strain F2365).